Reading from the N-terminus, the 210-residue chain is Probable GTP-binding protein EngB (210 aa).

In terms of domain architecture, EngB-type G spans 25-199 (TGIEVAFAGR…RQKLDTWFSE (175 aa)). Residues 33–40 (GRSNAGKS), 60–64 (GRTQL), 78–81 (DLPG), 145–148 (TKAD), and 178–180 (FSS) contribute to the GTP site. Mg(2+)-binding residues include Ser40 and Thr62.

Belongs to the TRAFAC class TrmE-Era-EngA-EngB-Septin-like GTPase superfamily. EngB GTPase family. The cofactor is Mg(2+).

In terms of biological role, necessary for normal cell division and for the maintenance of normal septation. This chain is Probable GTP-binding protein EngB, found in Shigella boydii serotype 4 (strain Sb227).